The primary structure comprises 820 residues: MAITRRSFLKGVATTSAASIIGPSLLTSVSAQAAETTGTWKVSGSHWGAFRAHIYGGKVQELKALELDTHPTEMLNGIQGILYSPSRVRYPMVRLDWLKKHKYSAETRGNNRFIRVTWDEAIDLFYRELERVQKQYGPWALHAGQTGWNQTGAFHNCTAMMQRAVGMHGNYITKVGDYSTGAGQTIMPYVLGSTEVYAQGTSWSEILDNSDNIILWANDPVKNLQVGWNCETHQSFGYLDQLKEKVAKGEINVVSVDPVKNKTQRFLQNDHLYINPQTDVAFMLALAHVLYTENLYDKKFIETYCLGFEEFIPYVLGKSKDKVEKTPEWAATICGVKPDAIRDFARMLVNGRTQLLFGWCIQRQEHGEQPYWMGAVLAAMIGQIGLPGGGISYGHHYSGIGVPSTGFAGPGGFPRNLDQGAKPKWDNNDFNGYSRTIPVARWIDAILEPGKKINHNGNTVTLPGFKMMVISGCNPWHHHQDRNKMKRAFQKLETVVTIDFSWTATCRFSDIVLPACTQWERNDIDSYGSYSGKGLIAMHRLVDPLFQSRTDFEIMTELTRRFGREKEYTRGMDEMEWVRSLYDECKKANEGKFAMPEFEEFWEKGFLDFGTGTPWVRHADFRKDPEINALGTPSGFIEITSRKIGRYGYEHCQEHPMWFEKTERSHGGPGSDKHPFWLQSCHPDKRLHSQMCEAEAFRATYAVQGREPVYINPLDAKAKGIKDGDLVRVFNDRGQLLAGAVLSDSYPRGVIRIEEGAWYGPLTEKVGAICTYGDPNTLTLDLGTSELAQATSANTCIVDFEKFRGEVPPVTSFGGPIEVI.

Residues methionine 1–alanine 33 constitute a signal peptide (tat-type signal). Mo-bis(molybdopterin guanine dinucleotide) is bound at residue serine 179.

This sequence belongs to the prokaryotic molybdopterin-containing oxidoreductase family. Mo-bis(molybdopterin guanine dinucleotide) is required as a cofactor. Predicted to be exported by the Tat system. The position of the signal peptide cleavage has not been experimentally proven.

The protein resides in the periplasm. It catalyses the reaction trimethylamine + 2 Fe(III)-[cytochrome c] + H2O = trimethylamine N-oxide + 2 Fe(II)-[cytochrome c] + 3 H(+). In terms of biological role, reduces trimethylamine-N-oxide (TMAO) into trimethylamine; an anaerobic reaction coupled to energy-yielding reactions. The chain is Trimethylamine-N-oxide reductase (torA) from Vibrio cholerae serotype O1 (strain ATCC 39315 / El Tor Inaba N16961).